We begin with the raw amino-acid sequence, 231 residues long: 2-C-methyl-D-erythritol 2,4-cyclodiphosphate synthase, chloroplastic (231 aa).

The transit peptide at 1–52 directs the protein to the chloroplast; it reads MATSSTQLLLSSSSLFHSQITKKPFLLPATKIGVWRPKKSLSLSCRPSASVS. Positions 82 and 84 each coordinate a divalent metal cation. Residues 82 to 84, 108 to 109, 112 to 120, 130 to 132, 135 to 139, aspartate 139, 174 to 180, and 205 to 209 contribute to the substrate site; these read DLH, HS, DVLLHCVVD, DIG, FPDSD, LQRPKIS, and AKTHE. Residue histidine 116 coordinates a divalent metal cation.

Belongs to the IspF family. As to quaternary structure, homotrimer. A divalent metal cation serves as cofactor.

The protein resides in the plastid. It localises to the chloroplast stroma. The enzyme catalyses 4-CDP-2-C-methyl-D-erythritol 2-phosphate = 2-C-methyl-D-erythritol 2,4-cyclic diphosphate + CMP. Its pathway is isoprenoid biosynthesis; isopentenyl diphosphate biosynthesis via DXP pathway; isopentenyl diphosphate from 1-deoxy-D-xylulose 5-phosphate: step 4/6. Functionally, enzyme of the plastid non-mevalonate pathway for isoprenoid biosynthesis that converts 4-diphosphocytidyl-2C-methyl-D-erythritol 2-phosphate into 2C-methyl-D-erythritol 2,4-cyclodiphosphate and CMP. Is essential for chloroplast development. This Arabidopsis thaliana (Mouse-ear cress) protein is 2-C-methyl-D-erythritol 2,4-cyclodiphosphate synthase, chloroplastic.